The sequence spans 181 residues: 6,7-dimethyl-8-ribityllumazine synthase (181 aa).

Residues Tyr-30, 61–63, and 87–89 each bind 5-amino-6-(D-ribitylamino)uracil; these read ALE and CII. Position 92–93 (92–93) interacts with (2S)-2-hydroxy-3-oxobutyl phosphate; that stretch reads ET. The active-site Proton donor is the His-95. A 5-amino-6-(D-ribitylamino)uracil-binding site is contributed by Asn-120. Arg-134 contacts (2S)-2-hydroxy-3-oxobutyl phosphate.

It belongs to the DMRL synthase family.

The catalysed reaction is (2S)-2-hydroxy-3-oxobutyl phosphate + 5-amino-6-(D-ribitylamino)uracil = 6,7-dimethyl-8-(1-D-ribityl)lumazine + phosphate + 2 H2O + H(+). Its pathway is cofactor biosynthesis; riboflavin biosynthesis; riboflavin from 2-hydroxy-3-oxobutyl phosphate and 5-amino-6-(D-ribitylamino)uracil: step 1/2. In terms of biological role, catalyzes the formation of 6,7-dimethyl-8-ribityllumazine by condensation of 5-amino-6-(D-ribitylamino)uracil with 3,4-dihydroxy-2-butanone 4-phosphate. This is the penultimate step in the biosynthesis of riboflavin. This chain is 6,7-dimethyl-8-ribityllumazine synthase, found in Beijerinckia indica subsp. indica (strain ATCC 9039 / DSM 1715 / NCIMB 8712).